The sequence spans 383 residues: Chorismate synthase (383 aa).

NADP(+)-binding residues include arginine 39 and arginine 45. FMN contacts are provided by residues 128 to 130 (RAS), glycine 291, 306 to 310 (KPIAT), and arginine 332.

This sequence belongs to the chorismate synthase family. In terms of assembly, homotetramer. Requires FMNH2 as cofactor.

The enzyme catalyses 5-O-(1-carboxyvinyl)-3-phosphoshikimate = chorismate + phosphate. It functions in the pathway metabolic intermediate biosynthesis; chorismate biosynthesis; chorismate from D-erythrose 4-phosphate and phosphoenolpyruvate: step 7/7. Catalyzes the anti-1,4-elimination of the C-3 phosphate and the C-6 proR hydrogen from 5-enolpyruvylshikimate-3-phosphate (EPSP) to yield chorismate, which is the branch point compound that serves as the starting substrate for the three terminal pathways of aromatic amino acid biosynthesis. This reaction introduces a second double bond into the aromatic ring system. In Thermus thermophilus (strain ATCC BAA-163 / DSM 7039 / HB27), this protein is Chorismate synthase.